The primary structure comprises 718 residues: D-(-)-3-hydroxybutyrate oligomer hydrolase (718 aa).

Catalysis depends on Ser320, which acts as the Charge relay system.

The protein belongs to the D-(-)-3-hydroxybutyrate oligomer hydrolase family.

Its subcellular location is the cytoplasm. It catalyses the reaction (3R)-hydroxybutanoate dimer + H2O = 2 (R)-3-hydroxybutanoate + H(+). Its pathway is lipid metabolism; butanoate metabolism. With respect to regulation, inhibited by diisopropylfluorophosphate (DFP). Its function is as follows. Participates in the degradation of poly-3-hydroxybutyrate (PHB). It works downstream of poly(3-hydroxybutyrate) depolymerase, hydrolyzing D(-)-3-hydroxybutyrate oligomers of various length (3HB-oligomers) into 3HB-monomers. Seems to have also poly(3-hydroxybutyrate) depolymerase activity since it is able to release 3HB-monomers from artificial amorphous PHB. In Cupriavidus necator (strain ATCC 17699 / DSM 428 / KCTC 22496 / NCIMB 10442 / H16 / Stanier 337) (Ralstonia eutropha), this protein is D-(-)-3-hydroxybutyrate oligomer hydrolase (phaZ2).